The chain runs to 309 residues: Replication factor C subunit 4 (309 aa).

ATP-binding positions include Val-5, Val-17, 42–50, Asn-134, and Arg-192; that span reads GPPGTGKTT.

Belongs to the activator 1 small subunits family. Component of the replication factor C (RFC) complex.

It localises to the nucleus. In terms of biological role, component of ATP-dependent clamp loader (RFC and RFC-like) complexes for DNA clamps. During a clamp loading circle, the RFC:clamp complex binds to DNA and the recognition of the double-stranded/single-stranded junction stimulates ATP hydrolysis by RFC. The complex presumably provides bipartite ATP sites in which one subunit supplies a catalytic site for hydrolysis of ATP bound to the neighboring subunit. Dissociation of RFC from the clamp leaves the clamp encircling DNA. Component of the replication factor C (RFC or activator 1) complex which acts during elongation of primed DNA templates by DNA polymerase delta and epsilon. RFC has an essential but redundant activity in sister chromatid cohesion establishment. This chain is Replication factor C subunit 4 (RFC4), found in Encephalitozoon cuniculi (strain GB-M1) (Microsporidian parasite).